The following is a 147-amino-acid chain: Lysozyme C-2 (147 aa).

An N-terminal signal peptide occupies residues 1–18 (MKALVILGFLFLSVAVQG). The region spanning 19-147 (KVFERCELAR…VSSYVEGCTL (129 aa)) is the C-type lysozyme domain. Disulfide bonds link Cys-24–Cys-145, Cys-48–Cys-133, Cys-83–Cys-99, and Cys-95–Cys-113. Catalysis depends on residues Glu-53 and Asp-71.

It belongs to the glycosyl hydrolase 22 family. Monomer. In terms of tissue distribution, stomach-specific.

The catalysed reaction is Hydrolysis of (1-&gt;4)-beta-linkages between N-acetylmuramic acid and N-acetyl-D-glucosamine residues in a peptidoglycan and between N-acetyl-D-glucosamine residues in chitodextrins.. Functionally, lysozymes have primarily a bacteriolytic function; those in tissues and body fluids are associated with the monocyte-macrophage system and enhance the activity of immunoagents. The polypeptide is Lysozyme C-2 (LYZ2) (Bos taurus (Bovine)).